The following is a 192-amino-acid chain: Peptidyl-tRNA hydrolase (192 aa).

Y14 contacts tRNA. Catalysis depends on H19, which acts as the Proton acceptor. TRNA contacts are provided by Y64, N66, and N112.

This sequence belongs to the PTH family. As to quaternary structure, monomer.

It localises to the cytoplasm. The enzyme catalyses an N-acyl-L-alpha-aminoacyl-tRNA + H2O = an N-acyl-L-amino acid + a tRNA + H(+). In terms of biological role, hydrolyzes ribosome-free peptidyl-tRNAs (with 1 or more amino acids incorporated), which drop off the ribosome during protein synthesis, or as a result of ribosome stalling. Its function is as follows. Catalyzes the release of premature peptidyl moieties from peptidyl-tRNA molecules trapped in stalled 50S ribosomal subunits, and thus maintains levels of free tRNAs and 50S ribosomes. The polypeptide is Peptidyl-tRNA hydrolase (Anaeromyxobacter sp. (strain K)).